The sequence spans 133 residues: Profilin-1 (133 aa).

Belongs to the profilin family. As to quaternary structure, occurs in many kinds of cells as a complex with monomeric actin in a 1:1 ratio. In terms of tissue distribution, ubiquitous.

It localises to the cytoplasm. Its subcellular location is the cytoskeleton. In terms of biological role, binds to actin and affects the structure of the cytoskeleton. At high concentrations, profilin prevents the polymerization of actin, whereas it enhances it at low concentrations. By binding to PIP2, it inhibits the formation of IP3 and DG. The chain is Profilin-1 (PRO1) from Solanum lycopersicum (Tomato).